The sequence spans 231 residues: Orotidine 5'-phosphate decarboxylase (231 aa).

Substrate-binding positions include Asp11, Lys33, 60–69 (DLKFHDIPNT), Thr120, Arg181, Gln190, Gly210, and Arg211. The active-site Proton donor is the Lys62.

Belongs to the OMP decarboxylase family. Type 1 subfamily. Homodimer.

It catalyses the reaction orotidine 5'-phosphate + H(+) = UMP + CO2. Its pathway is pyrimidine metabolism; UMP biosynthesis via de novo pathway; UMP from orotate: step 2/2. Functionally, catalyzes the decarboxylation of orotidine 5'-monophosphate (OMP) to uridine 5'-monophosphate (UMP). The chain is Orotidine 5'-phosphate decarboxylase from Vibrio atlanticus (strain LGP32) (Vibrio splendidus (strain Mel32)).